The sequence spans 524 residues: Alanine aminotransferase 2 (524 aa).

Lys-342 carries the post-translational modification N6-(pyridoxal phosphate)lysine.

It belongs to the class-I pyridoxal-phosphate-dependent aminotransferase family. Alanine aminotransferase subfamily. As to quaternary structure, homodimer. Pyridoxal 5'-phosphate is required as a cofactor.

The catalysed reaction is L-alanine + 2-oxoglutarate = pyruvate + L-glutamate. It functions in the pathway amino-acid degradation; L-alanine degradation via transaminase pathway; pyruvate from L-alanine: step 1/1. Its function is as follows. Catalyzes the reversible transamination between alanine and 2-oxoglutarate to form pyruvate and glutamate. This chain is Alanine aminotransferase 2 (gpt2), found in Xenopus tropicalis (Western clawed frog).